Consider the following 180-residue polypeptide: WPP domain-containing protein 2 (180 aa).

Low complexity predominate over residues 1-26 (MAETAETINTTISSPPPESESSTTIS). 2 disordered regions span residues 1–61 (MAET…LRIW) and 140–180 (SVKA…KSEA). Polar residues predominate over residues 27-36 (AMTDPTSQEA). Positions 37–53 (ASKDTDLTKEAESEKKP) are enriched in basic and acidic residues. The WPP stretch occupies residues 44 to 147 (TKEAESEKKP…LESVKARSNA (104 aa)). Position 173 is a phosphoserine (S173).

In terms of assembly, binds to FPP proteins. Interacts with WAP, WIP1, WIP2 and WIP3 through its WPP domain. Interacts with WIT1 and HSP70-1. Expressed in roots, stems, leaves and flowers.

It localises to the nucleus envelope. The protein resides in the cytoplasm. It is found in the nucleus. The protein localises to the golgi apparatus. Functionally, regulates the mitotic activity in roots. Plays a role with HSP70-1 in facilitating WIT1 nuclear envelope targeting. This is WPP domain-containing protein 2 (WPP2) from Arabidopsis thaliana (Mouse-ear cress).